The following is a 1441-amino-acid chain: Tyrosine-protein kinase BAZ1B (1441 aa).

Residues 26 to 132 (EEVYMIEHSK…GEECDFEVGP (107 aa)) form the WAC domain. Residues 147 to 171 (EKEEQASEKKSEGSCDSPSSDKENS) show a composition bias toward basic and acidic residues. Disordered stretches follow at residues 147–212 (EKEE…SLKK), 307–338 (NPSS…PSSW), 364–445 (NLNK…NKYL), and 531–555 (RIKE…KRYE). Residues 386–397 (QVLNGQKISAKT) are compositionally biased toward polar residues. Residues 398–408 (RSPKKGLKSPK) are compositionally biased toward basic residues. Over residues 430-441 (GGSNTPRSSSKP) the composition is skewed to polar residues. Positions 513–558 (TEEQREEYMRKKREALKARIKEKTRERKQKEREERLEKQKRYEDQD) form a coiled coil. Residues 578–642 (NALFGDVAMV…LQTLLQDEIA (65 aa)) form the DDT domain. Disordered regions lie at residues 675-696 (SPAG…SAVY), 766-785 (DKKR…KPKE), 823-858 (QAKK…AEKA), and 911-949 (PESK…ETTV). A compositionally biased stretch (acidic residues) spans 686 to 696 (GDEDSEGSAVY). Composition is skewed to basic and acidic residues over residues 776 to 785 (KEQGTVKPKE), 824 to 858 (AKKE…AEKA), and 937 to 946 (STQREEKHAE). Residues 813-861 (AVKSRRLQAMQAKKEKEEHEKLTKERIERETEEERSRKQKASAEKAFHE) adopt a coiled-coil conformation. The stretch at 1080–1113 (APKQKKRKHQSEEAAAKAEEQDEEKKMAEEAKVA) forms a coiled coil. A PHD-type zinc finger spans residues 1151-1201 (NARCKVCRKKGEDDKLILCDECNKAFHLFCLRPVLFNIPDGEWLCPACQPA). 2 disordered regions span residues 1204-1308 (RRSS…RQNQ) and 1408-1441 (HLPA…KQKK). Residues 1213–1253 (AEDSTQDEDEEEEEEESEEEEEEESDEEEEEQEMMGQRLRS) are a coiled coil. The segment covering 1216 to 1245 (STQDEDEEEEEEESEEEEEEESDEEEEEQE) has biased composition (acidic residues). The span at 1251–1270 (LRSRKAAKGKPGRPTRRGRP) shows a compositional bias: basic residues. A compositionally biased stretch (polar residues) spans 1299 to 1308 (SKPTSRRQNQ). Residues 1304–1408 (RRQNQEFQKC…QCARDLLGKH (105 aa)) enclose the Bromo domain.

It belongs to the WAL family. BAZ1B subfamily. In terms of assembly, interacts with smarca5/snf2h; the interaction is direct and forms the WICH complex. Component of the B-WICH complex. It depends on Mn(2+) as a cofactor. In terms of tissue distribution, highly expressed in the neural tube.

It is found in the nucleus. The enzyme catalyses L-tyrosyl-[protein] + ATP = O-phospho-L-tyrosyl-[protein] + ADP + H(+). Functionally, atypical tyrosine-protein kinase that plays a central role in chromatin remodeling and acts as a transcription regulator. Involved in DNA damage response by phosphorylating 'Tyr-142' of histone H2AX (H2AXY142ph). H2AXY142ph plays a central role in DNA repair and acts as a mark that distinguishes between apoptotic and repair responses to genotoxic stress. Essential component of the WICH complex, a chromatin remodeling complex that mobilizes nucleosomes and reconfigures irregular chromatin to a regular nucleosomal array structure. The WICH complex regulates the transcription of various genes, has a role in RNA polymerase I and RNA polymerase III transcription, mediates the histone H2AX phosphorylation at 'Tyr-142', and is involved in the maintenance of chromatin structures during DNA replication processes. The protein is Tyrosine-protein kinase BAZ1B (baz1b) of Xenopus laevis (African clawed frog).